A 482-amino-acid polypeptide reads, in one-letter code: UDP-N-acetylmuramate--L-alanine ligase (482 aa).

An ATP-binding site is contributed by Gly123–Thr129.

The protein belongs to the MurCDEF family.

The protein localises to the cytoplasm. The enzyme catalyses UDP-N-acetyl-alpha-D-muramate + L-alanine + ATP = UDP-N-acetyl-alpha-D-muramoyl-L-alanine + ADP + phosphate + H(+). It participates in cell wall biogenesis; peptidoglycan biosynthesis. Functionally, cell wall formation. The chain is UDP-N-acetylmuramate--L-alanine ligase from Pseudomonas putida (strain GB-1).